The chain runs to 504 residues: Cytochrome P450 2K1 (504 aa).

Cysteine 447 serves as a coordination point for heme.

Belongs to the cytochrome P450 family. Requires heme as cofactor.

It is found in the endoplasmic reticulum membrane. Its subcellular location is the microsome membrane. It carries out the reaction an organic molecule + reduced [NADPH--hemoprotein reductase] + O2 = an alcohol + oxidized [NADPH--hemoprotein reductase] + H2O + H(+). This Oncorhynchus mykiss (Rainbow trout) protein is Cytochrome P450 2K1 (cyp2k1).